The sequence spans 118 residues: Ribonuclease P protein component (118 aa).

Belongs to the RnpA family. In terms of assembly, consists of a catalytic RNA component (M1 or rnpB) and a protein subunit.

The catalysed reaction is Endonucleolytic cleavage of RNA, removing 5'-extranucleotides from tRNA precursor.. In terms of biological role, RNaseP catalyzes the removal of the 5'-leader sequence from pre-tRNA to produce the mature 5'-terminus. It can also cleave other RNA substrates such as 4.5S RNA. The protein component plays an auxiliary but essential role in vivo by binding to the 5'-leader sequence and broadening the substrate specificity of the ribozyme. The protein is Ribonuclease P protein component of Photobacterium profundum (strain SS9).